Reading from the N-terminus, the 353-residue chain is tRNA U34 carboxymethyltransferase (353 aa).

Residues Lys101, Trp119, Lys124, Gly144, 166 to 168 (DPS), 207 to 208 (LE), Met227, Tyr231, and Arg346 each bind carboxy-S-adenosyl-L-methionine.

The protein belongs to the class I-like SAM-binding methyltransferase superfamily. CmoB family. As to quaternary structure, homotetramer.

The enzyme catalyses carboxy-S-adenosyl-L-methionine + 5-hydroxyuridine(34) in tRNA = 5-carboxymethoxyuridine(34) in tRNA + S-adenosyl-L-homocysteine + H(+). Its function is as follows. Catalyzes carboxymethyl transfer from carboxy-S-adenosyl-L-methionine (Cx-SAM) to 5-hydroxyuridine (ho5U) to form 5-carboxymethoxyuridine (cmo5U) at position 34 in tRNAs. This is tRNA U34 carboxymethyltransferase from Psychrobacter sp. (strain PRwf-1).